The primary structure comprises 331 residues: 2-keto-3-deoxygluconate permease (331 aa).

10 consecutive transmembrane segments (helical) span residues 10–30 (IPGG…TLAP), 42–62 (GMIS…GASI), 77–97 (LVLT…MFIP), 100–120 (GIQT…AMDM), 141–161 (AFVL…LGSA), 163–183 (LASF…IGFA), 200–220 (PVLI…NVIM), 224–244 (LLGI…LIIA), 254–274 (TAGV…MIIA), and 289–309 (ALVA…TALY).

This sequence belongs to the KdgT transporter family.

The protein resides in the cell inner membrane. It carries out the reaction 2-dehydro-3-deoxy-D-gluconate(in) + H(+)(in) = 2-dehydro-3-deoxy-D-gluconate(out) + H(+)(out). Its function is as follows. Catalyzes the proton-dependent uptake of 2-keto-3-deoxygluconate (KDG) into the cell. The sequence is that of 2-keto-3-deoxygluconate permease from Enterobacter sp. (strain 638).